The sequence spans 165 residues: S-ribosylhomocysteine lyase (165 aa).

3 residues coordinate Fe cation: histidine 54, histidine 58, and cysteine 128.

It belongs to the LuxS family. In terms of assembly, homodimer. The cofactor is Fe cation.

It carries out the reaction S-(5-deoxy-D-ribos-5-yl)-L-homocysteine = (S)-4,5-dihydroxypentane-2,3-dione + L-homocysteine. Functionally, involved in the synthesis of autoinducer 2 (AI-2) which is secreted by bacteria and is used to communicate both the cell density and the metabolic potential of the environment. The regulation of gene expression in response to changes in cell density is called quorum sensing. Catalyzes the transformation of S-ribosylhomocysteine (RHC) to homocysteine (HC) and 4,5-dihydroxy-2,3-pentadione (DPD). The chain is S-ribosylhomocysteine lyase from Helicobacter hepaticus (strain ATCC 51449 / 3B1).